An 828-amino-acid polypeptide reads, in one-letter code: Translation initiation factor IF-2 (828 aa).

2 disordered regions span residues Ser48–Phe76 and Ala112–Leu148. Positions Tyr49–Leu58 are enriched in polar residues. A compositionally biased stretch (low complexity) spans Leu65–Glu74. Positions Asp116–Ser126 are enriched in acidic residues. Over residues Asp127–Glu144 the composition is skewed to basic and acidic residues. A tr-type G domain is found at Ser326–Lys496. The interval Gly335–Thr342 is G1. A GTP-binding site is contributed by Gly335–Thr342. The segment at Gly360–His364 is G2. Positions Asp382 to Gly385 are G3. GTP-binding positions include Asp382 to His386 and Asn436 to Asp439. Residues Asn436 to Asp439 form a G4 region. The segment at Ser472–Leu474 is G5.

Belongs to the TRAFAC class translation factor GTPase superfamily. Classic translation factor GTPase family. IF-2 subfamily.

The protein resides in the cytoplasm. Functionally, one of the essential components for the initiation of protein synthesis. Protects formylmethionyl-tRNA from spontaneous hydrolysis and promotes its binding to the 30S ribosomal subunits. Also involved in the hydrolysis of GTP during the formation of the 70S ribosomal complex. This Rickettsia bellii (strain OSU 85-389) protein is Translation initiation factor IF-2.